The chain runs to 229 residues: Large ribosomal subunit protein uL1 (229 aa).

Belongs to the universal ribosomal protein uL1 family. As to quaternary structure, part of the 50S ribosomal subunit.

Its function is as follows. Binds directly to 23S rRNA. The L1 stalk is quite mobile in the ribosome, and is involved in E site tRNA release. In terms of biological role, protein L1 is also a translational repressor protein, it controls the translation of the L11 operon by binding to its mRNA. This Lacticaseibacillus casei (strain BL23) (Lactobacillus casei) protein is Large ribosomal subunit protein uL1.